We begin with the raw amino-acid sequence, 507 residues long: ATP synthase subunit alpha, chloroplastic (507 aa).

Residue 170–177 (GDRQTGKT) participates in ATP binding.

The protein belongs to the ATPase alpha/beta chains family. As to quaternary structure, F-type ATPases have 2 components, CF(1) - the catalytic core - and CF(0) - the membrane proton channel. CF(1) has five subunits: alpha(3), beta(3), gamma(1), delta(1), epsilon(1). CF(0) has four main subunits: a, b, b' and c.

The protein resides in the plastid. It localises to the chloroplast thylakoid membrane. The catalysed reaction is ATP + H2O + 4 H(+)(in) = ADP + phosphate + 5 H(+)(out). In terms of biological role, produces ATP from ADP in the presence of a proton gradient across the membrane. The alpha chain is a regulatory subunit. In Tetradesmus obliquus (Green alga), this protein is ATP synthase subunit alpha, chloroplastic.